The following is a 428-amino-acid chain: L-rhamnonate dehydratase (428 aa).

H56 and R82 together coordinate substrate. Mg(2+) is bound by residues D249, E275, and E303. Catalysis depends on H352, which acts as the Proton acceptor. Residue E372 participates in substrate binding.

Belongs to the mandelate racemase/muconate lactonizing enzyme family. RhamD subfamily. As to quaternary structure, homooctamer; tetramer of dimers. Mg(2+) is required as a cofactor.

It carries out the reaction L-rhamnonate = 2-dehydro-3-deoxy-L-rhamnonate + H2O. Catalyzes the dehydration of L-rhamnonate to 2-keto-3-deoxy-L-rhamnonate (KDR). The polypeptide is L-rhamnonate dehydratase (Shigella sonnei (strain Ss046)).